The primary structure comprises 348 residues: UDP-3-O-acylglucosamine N-acyltransferase (348 aa).

H241 serves as the catalytic Proton acceptor.

Belongs to the transferase hexapeptide repeat family. LpxD subfamily. Homotrimer.

It carries out the reaction a UDP-3-O-[(3R)-3-hydroxyacyl]-alpha-D-glucosamine + a (3R)-hydroxyacyl-[ACP] = a UDP-2-N,3-O-bis[(3R)-3-hydroxyacyl]-alpha-D-glucosamine + holo-[ACP] + H(+). Its pathway is bacterial outer membrane biogenesis; LPS lipid A biosynthesis. Its function is as follows. Catalyzes the N-acylation of UDP-3-O-acylglucosamine using 3-hydroxyacyl-ACP as the acyl donor. Is involved in the biosynthesis of lipid A, a phosphorylated glycolipid that anchors the lipopolysaccharide to the outer membrane of the cell. The chain is UDP-3-O-acylglucosamine N-acyltransferase from Neisseria meningitidis serogroup C / serotype 2a (strain ATCC 700532 / DSM 15464 / FAM18).